Consider the following 126-residue polypeptide: Aspartate 1-decarboxylase (126 aa).

The active-site Schiff-base intermediate with substrate; via pyruvic acid is the Ser25. Ser25 is modified (pyruvic acid (Ser)). A substrate-binding site is contributed by Thr57. The active-site Proton donor is the Tyr58. 73 to 75 (GGA) serves as a coordination point for substrate.

Belongs to the PanD family. Heterooctamer of four alpha and four beta subunits. It depends on pyruvate as a cofactor. Is synthesized initially as an inactive proenzyme, which is activated by self-cleavage at a specific serine bond to produce a beta-subunit with a hydroxyl group at its C-terminus and an alpha-subunit with a pyruvoyl group at its N-terminus.

Its subcellular location is the cytoplasm. The catalysed reaction is L-aspartate + H(+) = beta-alanine + CO2. Its pathway is cofactor biosynthesis; (R)-pantothenate biosynthesis; beta-alanine from L-aspartate: step 1/1. Catalyzes the pyruvoyl-dependent decarboxylation of aspartate to produce beta-alanine. This is Aspartate 1-decarboxylase from Xanthomonas campestris pv. campestris (strain B100).